The following is a 1338-amino-acid chain: Fanconi anemia group I protein (1338 aa).

A Glycyl lysine isopeptide (Lys-Gly) (interchain with G-Cter in ubiquitin) cross-link involves residue Lys525. A phosphoserine mark is found at Ser558 and Ser561. Phosphothreonine is present on Thr567.

The protein belongs to the Fanconi anemia group I protein family. Homodimer. Part of a FANCI-FANCD2 heterodimeric complex that binds and scans dsDNA for DNA damage. Interacts with FANCL. Interacts with MTMR15/FAN1. Interacts with POLN. Interacts with UBL5; the interaction promotes FANCI homodimerization. Monoubiquitinated by FANCL during S phase and upon genotoxic stress. Deubiquitinated by USP1 as cells enter G2/M, or once DNA repair is completed. Monoubiquitination requires the FANCA-FANCB-FANCC-FANCE-FANCF-FANCG-FANCM complex. Ubiquitination is required for binding to chromatin, DNA repair, and normal cell cycle progression. Monoubiquitination is stimulated by DNA-binding. In terms of processing, phosphorylated in response to DNA damage by ATM and/or ATR. Phosphorylation of FANCI promotes ubiquitination of FANCD2, which prevents DNA release from the FANCI-FANCD2 complex.

Its function is as follows. Plays an essential role in the repair of DNA double-strand breaks by homologous recombination and in the repair of interstrand DNA cross-links (ICLs) by promoting FANCD2 monoubiquitination by FANCL and participating in recruitment to DNA repair sites. The FANCI-FANCD2 complex binds and scans double-stranded DNA (dsDNA) for DNA damage; this complex stalls at DNA junctions between double-stranded DNA and single-stranded DNA. Participates in S phase and G2 phase checkpoint activation upon DNA damage. The protein is Fanconi anemia group I protein of Gallus gallus (Chicken).